Consider the following 510-residue polypeptide: MIWHVQNENFILDSTRIFMKAFHLLLFHGSFIFPECILIFGLILLLMIDSTSDQKDRPWFYFISSTSLVMSITALLFRWKEEPIISFSGNFQTNNFNEIFQFLILLCSTLCIPLSVEYIECTEMAITEFLLFVLTATLGGMFLCGANDLITIFVAPECFSLCSYLLSGYTKRDVRSNEATTKYLLMGGASSSILVHGFSWLYGSSGGEIELQEIVNGLINTQMYNSPGISIALISITVGIGFKLSPAPFHQWTPDVYEGSPTPVVAFLSVTSKVAASASATRIFDIPFYFSSNEWHLLLEILAILSMILGNLIAITQTSMKRMLAYSSIGQIGYVIIGIIVGDSNDGYASMITYMLFYISMNLGTFARIVSFGLRTGTDNIRDYAGLYTKDPFLALSSALCLLSLGGLPPLAGFFGKLHLFWCGWQAGLYFLVSIGLLTSVVSIYYYLKIIKLLMTGRNQEITPHVRNYRRSPLRSNNSIEWSMTVCVIASTIPGISMNPILAIAQDTLF.

12 helical membrane passes run 24–44 (LLLF…GLIL), 59–79 (WFYF…LFRW), 99–119 (IFQF…VEYI), 124–144 (MAIT…MFLC), 149–169 (LITI…LSGY), 183–203 (YLLM…WLYG), 229–249 (ISIA…PAPF), 295–315 (WHLL…LIAI), 323–343 (MLAY…IVGD), 347–367 (GYAS…GTFA), 395–415 (ALSS…AGFF), and 418–438 (LHLF…IGLL).

The protein belongs to the complex I subunit 2 family. In terms of assembly, NDH is composed of at least 16 different subunits, 5 of which are encoded in the nucleus.

The protein resides in the plastid. The protein localises to the chloroplast thylakoid membrane. It carries out the reaction a plastoquinone + NADH + (n+1) H(+)(in) = a plastoquinol + NAD(+) + n H(+)(out). The enzyme catalyses a plastoquinone + NADPH + (n+1) H(+)(in) = a plastoquinol + NADP(+) + n H(+)(out). Its function is as follows. NDH shuttles electrons from NAD(P)H:plastoquinone, via FMN and iron-sulfur (Fe-S) centers, to quinones in the photosynthetic chain and possibly in a chloroplast respiratory chain. The immediate electron acceptor for the enzyme in this species is believed to be plastoquinone. Couples the redox reaction to proton translocation, and thus conserves the redox energy in a proton gradient. This Yucca glauca (Soapweed yucca) protein is NAD(P)H-quinone oxidoreductase subunit 2, chloroplastic.